The following is a 602-amino-acid chain: Myotubularin (602 aa).

A compositionally biased stretch (polar residues) spans 1-16 (MATSSTPKYNSNSLEN). The interval 1 to 33 (MATSSTPKYNSNSLENSVRRSPGDGINHEQNDE) is disordered. The span at 17–33 (SVRRSPGDGINHEQNDE) shows a compositional bias: basic and acidic residues. The region spanning 28–96 (HEQNDEISRL…GVIARIEKMG (69 aa)) is the GRAM domain. A Myotubularin phosphatase domain is found at 162 to 537 (GWAVYDAMTE…RHLELWVNYY (376 aa)). Positions 287, 312, and 313 each coordinate a 1,2-diacyl-sn-glycero-3-phospho-(1D-myo-inositol-3,5-bisphosphate). Positions 287, 312, and 313 each coordinate a 1,2-diacyl-sn-glycero-3-phospho-(1D-myo-inositol-3-phosphate). Cys-374 acts as the Phosphocysteine intermediate in catalysis. Residues Ser-375, Asp-376, Gly-377, Trp-378, Asp-379, Arg-380, Lys-416, and Arg-420 each coordinate a 1,2-diacyl-sn-glycero-3-phospho-(1D-myo-inositol-3,5-bisphosphate). Residues Ser-375, Asp-376, Gly-377, Trp-378, Asp-379, and Arg-380 each coordinate a 1,2-diacyl-sn-glycero-3-phospho-(1D-myo-inositol-3-phosphate). Arg-420 contacts a 1,2-diacyl-sn-glycero-3-phospho-(1D-myo-inositol-3-phosphate). Residues 577–602 (NSPKINRSTTSPSSPSQMMPQVQTPF) form a disordered region. Low complexity predominate over residues 584–602 (STTSPSSPSQMMPQVQTPF).

The protein belongs to the protein-tyrosine phosphatase family. Non-receptor class myotubularin subfamily.

Its subcellular location is the cytoplasm. It is found in the cell membrane. The protein localises to the cell projection. It localises to the filopodium. The protein resides in the ruffle. Its subcellular location is the late endosome. It is found in the myofibril. The protein localises to the sarcomere. The catalysed reaction is a 1,2-diacyl-sn-glycero-3-phospho-(1D-myo-inositol-3-phosphate) + H2O = a 1,2-diacyl-sn-glycero-3-phospho-(1D-myo-inositol) + phosphate. The enzyme catalyses a 1,2-diacyl-sn-glycero-3-phospho-(1D-myo-inositol-3,5-bisphosphate) + H2O = a 1,2-diacyl-sn-glycero-3-phospho-(1D-myo-inositol-5-phosphate) + phosphate. It catalyses the reaction 1,2-dioctanoyl-sn-glycero-3-phospho-(1-D-myo-inositol-3-phosphate) + H2O = 1,2-dioctanoyl-sn-glycero-3-phospho-(1D-myo-inositol) + phosphate. It carries out the reaction 1,2-dioctanoyl-sn-glycero-3-phospho-(1D-myo-inositol-3,5-bisphosphate) + H2O = 1,2-dioctanoyl-sn-glycero-3-phospho-(1D-myo-inositol-5-phosphate) + phosphate. The catalysed reaction is 1,2-dihexadecanoyl-sn-glycero-3-phospho-(1D-myo-inositol-3,5-phosphate) + H2O = 1,2-dihexadecanoyl-sn-glycero-3-phospho-(1D-myo-inositol-5-phosphate) + phosphate. Its function is as follows. Lipid phosphatase which dephosphorylates phosphatidylinositol 3-monophosphate (PI3P) and phosphatidylinositol 3,5-bisphosphate (PI(3,5)P2). This is Myotubularin (mtm1) from Xenopus laevis (African clawed frog).